The following is a 424-amino-acid chain: Enolase (424 aa).

Gln162 contacts (2R)-2-phosphoglycerate. Catalysis depends on Glu204, which acts as the Proton donor. Residues Asp241, Glu284, and Asp311 each coordinate Mg(2+). Lys336, Arg365, Ser366, and Lys387 together coordinate (2R)-2-phosphoglycerate. The active-site Proton acceptor is Lys336.

The protein belongs to the enolase family. Mg(2+) is required as a cofactor.

It localises to the cytoplasm. The protein resides in the secreted. The protein localises to the cell surface. It carries out the reaction (2R)-2-phosphoglycerate = phosphoenolpyruvate + H2O. It participates in carbohydrate degradation; glycolysis; pyruvate from D-glyceraldehyde 3-phosphate: step 4/5. Functionally, catalyzes the reversible conversion of 2-phosphoglycerate (2-PG) into phosphoenolpyruvate (PEP). It is essential for the degradation of carbohydrates via glycolysis. The chain is Enolase from Mesorhizobium japonicum (strain LMG 29417 / CECT 9101 / MAFF 303099) (Mesorhizobium loti (strain MAFF 303099)).